Here is a 107-residue protein sequence, read N- to C-terminus: Nucleoid-associated protein A1E_05550 (107 aa).

The protein belongs to the YbaB/EbfC family. In terms of assembly, homodimer.

It is found in the cytoplasm. Its subcellular location is the nucleoid. Its function is as follows. Binds to DNA and alters its conformation. May be involved in regulation of gene expression, nucleoid organization and DNA protection. The chain is Nucleoid-associated protein A1E_05550 from Rickettsia canadensis (strain McKiel).